The primary structure comprises 130 residues: Small ribosomal subunit protein uS11 (130 aa).

This sequence belongs to the universal ribosomal protein uS11 family. Part of the 30S ribosomal subunit. Interacts with proteins S7 and S18. Binds to IF-3.

In terms of biological role, located on the platform of the 30S subunit, it bridges several disparate RNA helices of the 16S rRNA. Forms part of the Shine-Dalgarno cleft in the 70S ribosome. The chain is Small ribosomal subunit protein uS11 from Blochmanniella floridana.